The following is a 187-amino-acid chain: Oligoribonuclease (187 aa).

The region spanning 7-170 is the Exonuclease domain; that stretch reads LCWLDMEMTG…DDILESIEEM (164 aa). The active site involves tyrosine 128.

This sequence belongs to the oligoribonuclease family.

The protein localises to the cytoplasm. 3'-to-5' exoribonuclease specific for small oligoribonucleotides. The protein is Oligoribonuclease of Neisseria meningitidis serogroup B (strain ATCC BAA-335 / MC58).